The sequence spans 118 residues: Myotrophin (118 aa).

3 ANK repeats span residues 1–30 (MGDK…DVNR), 34–65 (GGRK…NAAD), and 67–98 (HGIT…NVKG).

This sequence belongs to the myotrophin family.

The protein localises to the cytoplasm. The protein resides in the nucleus. It localises to the perinuclear region. Its function is as follows. Regulates NF-kappa-B transcription factor activity. Promotes growth of cardiomyocytes, but not cardiomyocyte proliferation. Promotes cardiac muscle hypertrophy. Plays a role in the regulation of the growth of actin filaments. Inhibits the activity of the F-actin-capping protein complex. The sequence is that of Myotrophin (mtpn) from Xenopus laevis (African clawed frog).